Here is a 321-residue protein sequence, read N- to C-terminus: uncharacterized protein (321 aa).

A disordered region spans residues 280 to 306 (NSDHINNENNTNSNNDDNSNNSNNNNE). Positions 286 to 306 (NENNTNSNNDDNSNNSNNNNE) are enriched in low complexity.

This is an uncharacterized protein from Dictyostelium discoideum (Social amoeba).